A 1463-amino-acid polypeptide reads, in one-letter code: Regulating synaptic membrane exocytosis protein 1 (1463 aa).

The segment at 1 to 26 (MSSAVGPRGPRPPTVPPPMQELPDLS) is disordered. Residues 9–20 (GPRPPTVPPPMQ) are compositionally biased toward pro residues. The 184-residue stretch at 22–205 (LPDLSHLTEE…TKSGAWFFGS (184 aa)) folds into the RabBD domain. The segment at 133–193 (KDDAPTCGIC…VCNLCRKQQE (61 aa)) adopts an FYVE-type zinc-finger fold. The Zn(2+) site is built by Cys-139, Cys-142, Cys-155, Cys-158, Cys-163, Cys-166, Cys-185, and Cys-188. The tract at residues 205–393 (SGPQQPSQDG…DVELESESVS (189 aa)) is disordered. A compositionally biased stretch (polar residues) spans 206–222 (GPQQPSQDGTLSDTATG). The segment covering 227-240 (VPREKKARLQERSR) has biased composition (basic and acidic residues). Positions 241–256 (SQTPLSTAAVSSQDTA) are enriched in polar residues. The segment covering 327–372 (ADERERKERRETRRLEKGRSQDYPDRLEKREDGRVAEDEKQRKEEE) has biased composition (basic and acidic residues). Residues 381–391 (SCEDVELESES) are compositionally biased toward acidic residues. Residue Ser-413 is modified to Phosphoserine. One can recognise a PDZ domain in the interval 440 to 526 (RTTMPKESGA…EPQVEIIVSR (87 aa)). The interval 533–567 (RIPESSHPPLESSSSSFESQKMERPSISVISPTSP) is disordered. Residues 535 to 551 (PESSHPPLESSSSSFES) show a composition bias toward low complexity. 2 positions are modified to phosphoserine: Ser-563 and Ser-566. In terms of domain architecture, C2 1 spans 577–700 (LPGQLSVKLW…ALLDDEPHWY (124 aa)). The segment at 705 to 856 (HDESSLPLPQ…YSSEPDSELL (152 aa)) is disordered. Ser-716 carries the post-translational modification Phosphoserine. Positions 770–779 (ATTLTVPEQQ) are enriched in polar residues. At Ser-812 the chain carries Phosphoserine. The span at 827-844 (RHHDASRSLADHRSRHAE) shows a compositional bias: basic and acidic residues. At Ser-866 the chain carries Phosphoserine. The interval 874–1049 (SELQPSLDRA…RQLPQVPVRS (176 aa)) is disordered. Basic and acidic residues predominate over residues 928-941 (PENDRHSRKSERSS). Polar residues predominate over residues 1021 to 1035 (QGSPTQSPPADTSFG). Ser-1023 carries the phosphoserine modification. Position 1025 is a phosphothreonine (Thr-1025). Ser-1027, Ser-1079, Ser-1081, Ser-1082, Ser-1110, Ser-1111, and Ser-1113 each carry phosphoserine. Residues 1104-1161 (DNASAKSSDSDVSDVSAISRASSTSRLSSTSFMSEQSERPRGRISSFTPKMQGRRMGT) are disordered. Residues 1116 to 1137 (SDVSAISRASSTSRLSSTSFMS) show a composition bias toward low complexity. At Ser-1187 the chain carries Phosphoserine. Positions 1216–1266 (RSRSTSQLSQTESGHKKLKSTIQRSTETGMAAEMRKMVRQPSRESTDGSIN) are disordered. The span at 1248 to 1261 (EMRKMVRQPSREST) shows a compositional bias: basic and acidic residues. Residues 1309 to 1427 (AMGDIQIGME…DLSSMVIGWY (119 aa)) form the C2 2 domain. Ser-1448, Ser-1451, Ser-1454, and Ser-1463 each carry phosphoserine.

In terms of assembly, binds SNAP25, SYT1 and CACNA1B. Interaction with SYT1 is enhanced by calcium ions. Interaction with SNAP25 is weaker in the presence of calcium ions. Interacts with TSPOAP1 and RIMBP2; interacts with PPFIA3 and PPFIA4. Interacts with ERC1. Interacts with RAB3A, RAB3B and RAB3D that have been activated by GTP-binding. Interacts with RAB3C, RAB10, RAB26 and RAB37. Binds UNC13A. Post-translationally, phosphorylated by BRSK1.

It localises to the cell membrane. It is found in the synapse. The protein localises to the presynaptic cell membrane. Functionally, rab effector involved in exocytosis. May act as scaffold protein that regulates neurotransmitter release at the active zone. Essential for maintaining normal probability of neurotransmitter release and for regulating release during short-term synaptic plasticity. Plays a role in dendrite formation by melanocytes. The polypeptide is Regulating synaptic membrane exocytosis protein 1 (Rims1) (Mus musculus (Mouse)).